We begin with the raw amino-acid sequence, 857 residues long: Catalase-peroxidase (857 aa).

Positions 207-330 (WHSAGTYRVS…LAAVQMGLIY (124 aa)) form a cross-link, tryptophyl-tyrosyl-methioninium (Trp-Tyr) (with M-356). Histidine 208 (proton acceptor) is an active-site residue. A cross-link (tryptophyl-tyrosyl-methioninium (Tyr-Met) (with W-207)) is located at residues 330-356 (YVNPEGPNGKPDPIAAAKDIRETFGRM). Residue histidine 371 coordinates heme b.

The protein belongs to the peroxidase family. Peroxidase/catalase subfamily. As to quaternary structure, homodimer or homotetramer. Heme b is required as a cofactor. Post-translationally, formation of the three residue Trp-Tyr-Met cross-link is important for the catalase, but not the peroxidase activity of the enzyme.

It catalyses the reaction H2O2 + AH2 = A + 2 H2O. It carries out the reaction 2 H2O2 = O2 + 2 H2O. Its function is as follows. Bifunctional enzyme with both catalase and broad-spectrum peroxidase activity. This chain is Catalase-peroxidase, found in Rhodopirellula baltica (strain DSM 10527 / NCIMB 13988 / SH1).